We begin with the raw amino-acid sequence, 237 residues long: MYNSMLPMFMCNNIVDDIDDIDDIDDIDDIDDIDDIDDKASNNDDHNYVYPLPENMVYRFNKSTNILDYLSTERDHVMMAVQYYMSKQRLDDLYRQLPTKTRSYIDIINMYCDKVNNDYNRDMNIMYDMASTESFTVYDINNEVNTILMDNKGLGVRLATISFITELGKRCMNPVETIKMFTLLSHTICDDCFIDYITDISPPDNTIPNISTREYLKLIGITAIMFATYKTLKYMIG.

It belongs to the orthopoxvirus OPG045 family. In terms of assembly, interacts with host BAK1, BAX and BID.

Its subcellular location is the host mitochondrion outer membrane. It is found in the host cytoplasm. Functionally, plays a role in the inhibition of host apoptosis. Interacts with host BAX and thereby inhibits its activity. This chain is Apoptosis regulator OPG045 (OPG045), found in Homo sapiens (Human).